A 192-amino-acid polypeptide reads, in one-letter code: MEVILLERISKLGQMGETVKVRDGFARNYLLPLGKALRANAANKTRFEAERATLEARNLERKSEAQKVADVLDGKSFIVVRSAGETGQLYGSVAARDVVEILGAEGFNIGRNQVHLNTPIKSIGLHKVELQLHAEVEIHVELNVARSAEEAERQAKGEELTSVDAIYGVDEDALRPEDFFDPEADGVDEDEA.

The interval 173–192 (ALRPEDFFDPEADGVDEDEA) is disordered. Residues 179 to 192 (FFDPEADGVDEDEA) are compositionally biased toward acidic residues.

This sequence belongs to the bacterial ribosomal protein bL9 family.

Binds to the 23S rRNA. This Rhizobium leguminosarum bv. trifolii protein is Large ribosomal subunit protein bL9 (rplI).